Here is a 362-residue protein sequence, read N- to C-terminus: UDP-N-acetylglucosamine--N-acetylmuramyl-(pentapeptide) pyrophosphoryl-undecaprenol N-acetylglucosamine transferase (362 aa).

Residues 15-17 (TGG), N127, R165, S191, I247, 266-271 (ALTVSE), and Q292 contribute to the UDP-N-acetyl-alpha-D-glucosamine site.

This sequence belongs to the glycosyltransferase 28 family. MurG subfamily.

Its subcellular location is the cell inner membrane. It carries out the reaction di-trans,octa-cis-undecaprenyl diphospho-N-acetyl-alpha-D-muramoyl-L-alanyl-D-glutamyl-meso-2,6-diaminopimeloyl-D-alanyl-D-alanine + UDP-N-acetyl-alpha-D-glucosamine = di-trans,octa-cis-undecaprenyl diphospho-[N-acetyl-alpha-D-glucosaminyl-(1-&gt;4)]-N-acetyl-alpha-D-muramoyl-L-alanyl-D-glutamyl-meso-2,6-diaminopimeloyl-D-alanyl-D-alanine + UDP + H(+). It functions in the pathway cell wall biogenesis; peptidoglycan biosynthesis. Functionally, cell wall formation. Catalyzes the transfer of a GlcNAc subunit on undecaprenyl-pyrophosphoryl-MurNAc-pentapeptide (lipid intermediate I) to form undecaprenyl-pyrophosphoryl-MurNAc-(pentapeptide)GlcNAc (lipid intermediate II). The sequence is that of UDP-N-acetylglucosamine--N-acetylmuramyl-(pentapeptide) pyrophosphoryl-undecaprenol N-acetylglucosamine transferase from Shewanella sp. (strain ANA-3).